Reading from the N-terminus, the 23-residue chain is Potassium channel toxin alpha-KTx 13.3 (23 aa).

Intrachain disulfides connect Cys-2–Cys-15, Cys-5–Cys-20, and Cys-9–Cys-22. Positions 13–20 (GKCINGRC) are interaction with Ca(2+)-activated K(+) channels. Tyr-23 bears the Tyrosine amide mark.

As to expression, expressed by the venom gland.

The protein resides in the secreted. Reversibly blocks Shaker B potassium channels, with a dissociation constant of 200 nM. The protein is Potassium channel toxin alpha-KTx 13.3 of Tityus pachyurus (Colombian scorpion).